Reading from the N-terminus, the 539-residue chain is 4-coumarate--CoA ligase 5 (539 aa).

The ATP site is built by Ser-185, Ser-186, Gly-187, Thr-188, Thr-189, and Lys-193. 2 residues coordinate (E)-4-coumaroyl-AMP: Tyr-235 and Ser-239. Residue Arg-256 participates in CoA binding. The SBD1 stretch occupies residues Asp-258–Gln-327. Positions 305, 327, 328, 332, and 340 each coordinate (E)-4-coumaroyl-AMP. ATP is bound by residues Gln-327, Gly-328, and Thr-332. The SBD2 stretch occupies residues Gly-328–Tyr-395. 2 residues coordinate ATP: Asp-416 and Arg-431. (E)-4-coumaroyl-AMP is bound by residues Lys-433 and Lys-437. The CoA site is built by Lys-439 and Gly-440. Lys-522 serves as a coordination point for ATP.

Belongs to the ATP-dependent AMP-binding enzyme family. Mg(2+) is required as a cofactor. Expressed in roots, stems, leaf blades, leaf sheaths and spikelets.

The enzyme catalyses (E)-ferulate + ATP + CoA = (E)-feruloyl-CoA + AMP + diphosphate. The catalysed reaction is (E)-4-coumarate + ATP + CoA = (E)-4-coumaroyl-CoA + AMP + diphosphate. It catalyses the reaction (E)-sinapate + ATP + CoA = (E)-sinapoyl-CoA + AMP + diphosphate. It carries out the reaction (E)-caffeate + ATP + CoA = (E)-caffeoyl-CoA + AMP + diphosphate. The enzyme catalyses (E)-cinnamate + ATP + CoA = (E)-cinnamoyl-CoA + AMP + diphosphate. The catalysed reaction is (E)-ferulate + ATP + H(+) = (E)-feruloyl-AMP + diphosphate. It catalyses the reaction (E)-feruloyl-AMP + CoA = (E)-feruloyl-CoA + AMP + H(+). It carries out the reaction (E)-4-coumarate + ATP + H(+) = (E)-4-coumaroyl-AMP + diphosphate. The enzyme catalyses (E)-4-coumaroyl-AMP + CoA = (E)-4-coumaroyl-CoA + AMP + H(+). The catalysed reaction is (E)-sinapate + ATP + H(+) = (E)-sinapoyl-AMP + diphosphate. It catalyses the reaction (E)-sinapoyl-AMP + CoA = (E)-sinapoyl-CoA + AMP + H(+). It carries out the reaction (E)-caffeate + ATP + H(+) = (E)-caffeoyl-AMP + diphosphate. The enzyme catalyses (E)-caffeoyl-AMP + CoA = (E)-caffeoyl-CoA + AMP + H(+). It participates in phytoalexin biosynthesis; 3,4',5-trihydroxystilbene biosynthesis; 3,4',5-trihydroxystilbene from trans-4-coumarate: step 1/2. In terms of biological role, involved in the phenylpropanoid metabolism by mediating the activation of a number of hydroxycinnamates for the biosynthesis of monolignols and other phenolic secondary metabolites. Catalyzes the formation of CoA esters of cinnamate, 4-coumarate, caffeate and ferulate. Is also able to convert sinapate to its corresponding CoA ester, a reaction that is rarely observed in 4CL catalysis. Is more efficient with substrates in the following order: ferulate &gt; 4-coumarate &gt; sinapate &gt; caffeate &gt; cinnamate. Follows a two-step reaction mechanism, wherein the carboxylate substrate first undergoes adenylation by ATP, followed by a thioesterification in the presence of CoA to yield the final CoA thioesters. This is 4-coumarate--CoA ligase 5 from Oryza sativa subsp. japonica (Rice).